The primary structure comprises 271 residues: Ribosomal RNA small subunit methyltransferase J (271 aa).

S-adenosyl-L-methionine contacts are provided by residues R116–D117, E132–R133, S168–S169, and D190.

The protein belongs to the methyltransferase superfamily. RsmJ family.

The protein localises to the cytoplasm. The catalysed reaction is guanosine(1516) in 16S rRNA + S-adenosyl-L-methionine = N(2)-methylguanosine(1516) in 16S rRNA + S-adenosyl-L-homocysteine + H(+). Specifically methylates the guanosine in position 1516 of 16S rRNA. The protein is Ribosomal RNA small subunit methyltransferase J of Shewanella piezotolerans (strain WP3 / JCM 13877).